Consider the following 547-residue polypeptide: Chaperonin GroEL (547 aa).

ATP contacts are provided by residues 30 to 33, lysine 51, 87 to 91, glycine 415, and aspartate 495; these read TLGP and DGTTT. Residues 526–547 are disordered; it reads KKESAGGGGMPGGMGGMGGMDF. Residues 530 to 547 show a composition bias toward gly residues; that stretch reads AGGGGMPGGMGGMGGMDF.

This sequence belongs to the chaperonin (HSP60) family. As to quaternary structure, forms a cylinder of 14 subunits composed of two heptameric rings stacked back-to-back. Interacts with the co-chaperonin GroES.

The protein localises to the cytoplasm. The enzyme catalyses ATP + H2O + a folded polypeptide = ADP + phosphate + an unfolded polypeptide.. In terms of biological role, together with its co-chaperonin GroES, plays an essential role in assisting protein folding. The GroEL-GroES system forms a nano-cage that allows encapsulation of the non-native substrate proteins and provides a physical environment optimized to promote and accelerate protein folding. The protein is Chaperonin GroEL of Hyphomonas neptunium (strain ATCC 15444).